A 377-amino-acid polypeptide reads, in one-letter code: Cilia- and flagella-associated protein 263 (377 aa).

Coiled coils occupy residues 95-243 (LTAD…NQEL) and 280-354 (LRKE…SLKG).

Belongs to the CFAP263 family. In terms of assembly, forms a complex with CFAP184; the interaction is required for functional activity in cilia. Interacts with HAP1 and PCM1.

It localises to the cytoplasm. The protein resides in the cytoskeleton. Its subcellular location is the microtubule organizing center. It is found in the centrosome. The protein localises to the centriolar satellite. It localises to the cell projection. The protein resides in the cilium. Functionally, component of centriolar satellites contributing to primary cilium formation. In complex with CFAP263, acts as a regulator of ciliary beating that connects radial spoke 3 (RS3) to the inner dynein arm (IDA) and the nexin-dynein regulatory complex (N-DRC). The complex is positioned parallel to N-DRC and forms a connection between the arch at the base of RS3, the IDA tail and N-DRC. The polypeptide is Cilia- and flagella-associated protein 263 (Homo sapiens (Human)).